A 704-amino-acid polypeptide reads, in one-letter code: MPNLLLELRSEEIPARMQRKAAGDLKKLVTDALVEAGLSYEGAREYWTPRRLALDIHGLTARSADVREERKGPRTDANEKAIEGFLRGAGLSSISEAQVVNDPKKGDFYVAVISKPGRATEEIVAEVMPGIIRDFPWPKSMRWGKASSAPGALRWVRPLQSIVCTFGPEHEETTVIPFEIDGITASNITYGHRFHAPEAIMVRRFDDYAASLERAKVILDAERRKDIILHDARDIAFANGLELVEDEGLLEEVSGLVEWPQVLMGSFEEDYLSIPSEIIRLTIKTNQKCFVTRKQGEDTLSNRFILVSNIEASDGGKEIVHGNGKVVRARLSDALHFWKRDQGNLPDLETLAASAAKFGLDLQKPLDQRMAKLDALDVTFHAKLGTQGARVARIRALAQKLAAVTGADAALTDRAAVLAKADLRTEAVGEFPELQGLMGRKYAALQGENASVAAAIEDHYKPQGPSDRVPEDKVAITLALADKLDTLTGFWAIDEKPTGSKDPFALRRAALGVVRILLERGIRLPLLATTRDGDLLSFFHDRLKVYLRDQGARHDLIDAVLTPEADDLLMVARRVEALTAFITSEDGKNLLAGTKRATQLLAAEEKKGTVIADGVSPALFKLDAEKELFAAISSASKDAANAVAGEDFRSAMEALSKLRGPVDRFFEDVLVNDEDAAIRANRLALLRLIREATGTVADFSKISG.

The protein belongs to the class-II aminoacyl-tRNA synthetase family. As to quaternary structure, tetramer of two alpha and two beta subunits.

Its subcellular location is the cytoplasm. The catalysed reaction is tRNA(Gly) + glycine + ATP = glycyl-tRNA(Gly) + AMP + diphosphate. This chain is Glycine--tRNA ligase beta subunit, found in Rhizobium etli (strain ATCC 51251 / DSM 11541 / JCM 21823 / NBRC 15573 / CFN 42).